A 165-amino-acid polypeptide reads, in one-letter code: 2-C-methyl-D-erythritol 2,4-cyclodiphosphate synthase (165 aa).

D12 and H14 together coordinate a divalent metal cation. Residues 12–14 (DVH) and 38–39 (HS) contribute to the 4-CDP-2-C-methyl-D-erythritol 2-phosphate site. H46 is an a divalent metal cation binding site. 4-CDP-2-C-methyl-D-erythritol 2-phosphate-binding positions include 60–62 (DIG), 65–69 (FPDTD), F143, and R146.

It belongs to the IspF family. Homotrimer. A divalent metal cation serves as cofactor.

The catalysed reaction is 4-CDP-2-C-methyl-D-erythritol 2-phosphate = 2-C-methyl-D-erythritol 2,4-cyclic diphosphate + CMP. The protein operates within isoprenoid biosynthesis; isopentenyl diphosphate biosynthesis via DXP pathway; isopentenyl diphosphate from 1-deoxy-D-xylulose 5-phosphate: step 4/6. Its function is as follows. Involved in the biosynthesis of isopentenyl diphosphate (IPP) and dimethylallyl diphosphate (DMAPP), two major building blocks of isoprenoid compounds. Catalyzes the conversion of 4-diphosphocytidyl-2-C-methyl-D-erythritol 2-phosphate (CDP-ME2P) to 2-C-methyl-D-erythritol 2,4-cyclodiphosphate (ME-CPP) with a corresponding release of cytidine 5-monophosphate (CMP). This Aromatoleum aromaticum (strain DSM 19018 / LMG 30748 / EbN1) (Azoarcus sp. (strain EbN1)) protein is 2-C-methyl-D-erythritol 2,4-cyclodiphosphate synthase.